We begin with the raw amino-acid sequence, 377 residues long: Succinyl-diaminopimelate desuccinylase (377 aa).

His68 lines the Zn(2+) pocket. Asp70 is an active-site residue. Asp101 provides a ligand contact to Zn(2+). The active-site Proton acceptor is Glu135. The Zn(2+) site is built by Glu136, Glu164, and His350.

Belongs to the peptidase M20A family. DapE subfamily. Homodimer. Zn(2+) serves as cofactor. It depends on Co(2+) as a cofactor.

The enzyme catalyses N-succinyl-(2S,6S)-2,6-diaminopimelate + H2O = (2S,6S)-2,6-diaminopimelate + succinate. Its pathway is amino-acid biosynthesis; L-lysine biosynthesis via DAP pathway; LL-2,6-diaminopimelate from (S)-tetrahydrodipicolinate (succinylase route): step 3/3. Functionally, catalyzes the hydrolysis of N-succinyl-L,L-diaminopimelic acid (SDAP), forming succinate and LL-2,6-diaminopimelate (DAP), an intermediate involved in the bacterial biosynthesis of lysine and meso-diaminopimelic acid, an essential component of bacterial cell walls. This chain is Succinyl-diaminopimelate desuccinylase, found in Acinetobacter baumannii (strain AB307-0294).